Reading from the N-terminus, the 173-residue chain is Dual-action ribosomal maturation protein DarP (173 aa).

This sequence belongs to the DarP family.

It is found in the cytoplasm. In terms of biological role, member of a network of 50S ribosomal subunit biogenesis factors which assembles along the 30S-50S interface, preventing incorrect 23S rRNA structures from forming. Promotes peptidyl transferase center (PTC) maturation. The polypeptide is Dual-action ribosomal maturation protein DarP (Pseudomonas fluorescens (strain ATCC BAA-477 / NRRL B-23932 / Pf-5)).